A 177-amino-acid polypeptide reads, in one-letter code: SKP1-like protein 15 (177 aa).

The tract at residues 108–167 (ILAANYLNVEGLLGLTCQTVADYIKDKTPEEVRELFNIENDFTHEEEEEAIRKENAWAFE) is interaction with the F-box domain of F-box proteins.

It belongs to the SKP1 family. As to quaternary structure, part of a SCF (SKP1-cullin-F-box) protein ligase complex. As to expression, expressed at low levels in seedlings and leaves.

Its subcellular location is the nucleus. It functions in the pathway protein modification; protein ubiquitination. Involved in ubiquitination and subsequent proteasomal degradation of target proteins. Together with CUL1, RBX1 and a F-box protein, it forms a SCF E3 ubiquitin ligase complex. The functional specificity of this complex depends on the type of F-box protein. In the SCF complex, it serves as an adapter that links the F-box protein to CUL1. In Arabidopsis thaliana (Mouse-ear cress), this protein is SKP1-like protein 15 (ASK15).